The primary structure comprises 123 residues: Holo-[acyl-carrier-protein] synthase (123 aa).

The Mg(2+) site is built by Asp-9 and Glu-57.

The protein belongs to the P-Pant transferase superfamily. AcpS family. Requires Mg(2+) as cofactor.

Its subcellular location is the cytoplasm. It catalyses the reaction apo-[ACP] + CoA = holo-[ACP] + adenosine 3',5'-bisphosphate + H(+). Transfers the 4'-phosphopantetheine moiety from coenzyme A to a Ser of acyl-carrier-protein. The chain is Holo-[acyl-carrier-protein] synthase from Streptomyces avermitilis (strain ATCC 31267 / DSM 46492 / JCM 5070 / NBRC 14893 / NCIMB 12804 / NRRL 8165 / MA-4680).